Here is a 1024-residue protein sequence, read N- to C-terminus: E3 ISG15--protein ligase HERC5 (1024 aa).

Basic residues predominate over residues 1-13 (MERRSRRKSRRNG). The interval 1–28 (MERRSRRKSRRNGRSTAGKAAATQPAKS) is disordered. RCC1 repeat units lie at residues 96–155 (NMKI…ALSK), 156–208 (GGEL…ALSM), 209–260 (SGNI…LLTQ), 262–312 (GLLF…AYVS), and 314–364 (LGKV…LIMI). The HECT domain occupies 702–1024 (ENEDLRKELW…EAINNNRGFG (323 aa)). C994 acts as the Glycyl thioester intermediate in catalysis.

In terms of assembly, (Microbial infection) Interacts with human cytomegalovirus protein UL26; this interaction inhibits global protein ISGylation. As to quaternary structure, (Microbial infection) Interacts with Kaposi's sarcoma-associated herpesvirus protein v-IRF1; this interaction inhibits global protein ISGylation. Binds to CCNA1, CCNB1, CCND1 and CCNE1. Interacts with UBE2L6. Interacts with IRF3, this interaction is marginal in resting cells but enhanced upon viral infection. Interacts with influenza A virus NS1. ISGylated. As to expression, expressed in testis and to a lesser degree in brain, ovary and placenta. Found in most tissues at low levels.

It is found in the cytoplasm. The protein resides in the perinuclear region. Functionally, major E3 ligase for ISG15 conjugation. Acts as a positive regulator of innate antiviral response in cells induced by interferon. Functions as part of the ISGylation machinery that recognizes target proteins in a broad and relatively non-specific manner. Catalyzes ISGylation of IRF3 which results in sustained activation, it attenuates IRF3-PIN1 interaction, which antagonizes IRF3 ubiquitination and degradation, and boosts the antiviral response. Mediates ISGylation of the phosphatase PTEN leading to its degradation, thus alleviating its suppression of the PI3K-AKT signaling pathway and promoting the production of cytokines that facilitate bacterial clearance. Interferes with the function of key viral structural proteins such as ebolavirus structural protein VP40 or HIV-1 protein GAG. Catalyzes ISGylation of influenza A viral NS1 which attenuates virulence; ISGylated NS1 fails to form homodimers and thus to interact with its RNA targets. Catalyzes ISGylation of papillomavirus type 16 L1 protein which results in dominant-negative effect on virus infectivity. Physically associated with polyribosomes, broadly modifies newly synthesized proteins in a cotranslational manner. In an interferon-stimulated cell, newly translated viral proteins are primary targets of ISG15. Promotes parkin/PRKN ubiquitin E3 ligase activity by suppressing the intramolecular interaction that maintains its autoinhibited conformation. (Microbial infection) Functions as an E3 ligase for ISGylation of hepatitis B virus protein X leading to enhanced viral replication due to increased interferon resistance. In Homo sapiens (Human), this protein is E3 ISG15--protein ligase HERC5 (HERC5).